A 95-amino-acid chain; its full sequence is Small ribosomal subunit protein uS19 (95 aa).

It belongs to the universal ribosomal protein uS19 family.

Functionally, protein S19 forms a complex with S13 that binds strongly to the 16S ribosomal RNA. The chain is Small ribosomal subunit protein uS19 from Syntrophobacter fumaroxidans (strain DSM 10017 / MPOB).